A 351-amino-acid chain; its full sequence is Photosystem II D2 protein (351 aa).

The chain crosses the membrane as a helical span at residues 39–59 (CAYLALGGWLTGTTFVTSWYT). Position 116 (histidine 116) interacts with chlorophyll a. Residues 123–139 (GFMLRQFEIARLVGIRP) traverse the membrane as a helical segment. The pheophytin a site is built by glutamine 128 and asparagine 141. The chain crosses the membrane as a helical span at residues 151 to 164 (VFVSVFLMYPLGQS). Chlorophyll a is bound at residue histidine 196. The helical transmembrane segment at 206 to 226 (GALLCAIHGATVENTLFEDGE) threads the bilayer. Positions 213 and 260 each coordinate a plastoquinone. Position 213 (histidine 213) interacts with Fe cation. Histidine 267 contacts Fe cation. The helical transmembrane segment at 277-293 (GLWMSAIGIVGLALNLR) threads the bilayer.

This sequence belongs to the reaction center PufL/M/PsbA/D family. As to quaternary structure, PSII is composed of 1 copy each of membrane proteins PsbA, PsbB, PsbC, PsbD, PsbE, PsbF, PsbH, PsbI, PsbJ, PsbK, PsbL, PsbM, PsbT, PsbX, PsbY, PsbZ, Psb30/Ycf12, peripheral proteins PsbO, CyanoQ (PsbQ), PsbU, PsbV and a large number of cofactors. It forms dimeric complexes. It depends on The D1/D2 heterodimer binds P680, chlorophylls that are the primary electron donor of PSII, and subsequent electron acceptors. It shares a non-heme iron and each subunit binds pheophytin, quinone, additional chlorophylls, carotenoids and lipids. There is also a Cl(-1) ion associated with D1 and D2, which is required for oxygen evolution. The PSII complex binds additional chlorophylls, carotenoids and specific lipids. as a cofactor.

The protein localises to the cellular thylakoid membrane. It carries out the reaction 2 a plastoquinone + 4 hnu + 2 H2O = 2 a plastoquinol + O2. Functionally, photosystem II (PSII) is a light-driven water:plastoquinone oxidoreductase that uses light energy to abstract electrons from H(2)O, generating O(2) and a proton gradient subsequently used for ATP formation. It consists of a core antenna complex that captures photons, and an electron transfer chain that converts photonic excitation into a charge separation. The D1/D2 (PsbA/PsbD) reaction center heterodimer binds P680, the primary electron donor of PSII as well as several subsequent electron acceptors. D2 is needed for assembly of a stable PSII complex. In Crocosphaera subtropica (strain ATCC 51142 / BH68) (Cyanothece sp. (strain ATCC 51142)), this protein is Photosystem II D2 protein.